The sequence spans 82 residues: UPF0291 protein PEPE_0871 (82 aa).

Belongs to the UPF0291 family.

The protein localises to the cytoplasm. The protein is UPF0291 protein PEPE_0871 of Pediococcus pentosaceus (strain ATCC 25745 / CCUG 21536 / LMG 10740 / 183-1w).